The primary structure comprises 153 residues: D-aminoacyl-tRNA deacylase (153 aa).

Residues glycine 137–proline 138 carry the Gly-cisPro motif, important for rejection of L-amino acids motif.

It belongs to the DTD family. Homodimer.

Its subcellular location is the cytoplasm. It catalyses the reaction glycyl-tRNA(Ala) + H2O = tRNA(Ala) + glycine + H(+). The enzyme catalyses a D-aminoacyl-tRNA + H2O = a tRNA + a D-alpha-amino acid + H(+). Its function is as follows. An aminoacyl-tRNA editing enzyme that deacylates mischarged D-aminoacyl-tRNAs. Also deacylates mischarged glycyl-tRNA(Ala), protecting cells against glycine mischarging by AlaRS. Acts via tRNA-based rather than protein-based catalysis; rejects L-amino acids rather than detecting D-amino acids in the active site. By recycling D-aminoacyl-tRNA to D-amino acids and free tRNA molecules, this enzyme counteracts the toxicity associated with the formation of D-aminoacyl-tRNA entities in vivo and helps enforce protein L-homochirality. This Herpetosiphon aurantiacus (strain ATCC 23779 / DSM 785 / 114-95) protein is D-aminoacyl-tRNA deacylase.